Here is a 407-residue protein sequence, read N- to C-terminus: Probable tRNA sulfurtransferase (407 aa).

The region spanning 61-165 (NEITYRLSKI…LDAIYMYEEV (105 aa)) is the THUMP domain. ATP contacts are provided by residues 183 to 184 (ML), 208 to 209 (HF), R265, G287, and Q296.

Belongs to the ThiI family.

It is found in the cytoplasm. The enzyme catalyses [ThiI sulfur-carrier protein]-S-sulfanyl-L-cysteine + a uridine in tRNA + 2 reduced [2Fe-2S]-[ferredoxin] + ATP + H(+) = [ThiI sulfur-carrier protein]-L-cysteine + a 4-thiouridine in tRNA + 2 oxidized [2Fe-2S]-[ferredoxin] + AMP + diphosphate. It catalyses the reaction [ThiS sulfur-carrier protein]-C-terminal Gly-Gly-AMP + S-sulfanyl-L-cysteinyl-[cysteine desulfurase] + AH2 = [ThiS sulfur-carrier protein]-C-terminal-Gly-aminoethanethioate + L-cysteinyl-[cysteine desulfurase] + A + AMP + 2 H(+). It participates in cofactor biosynthesis; thiamine diphosphate biosynthesis. In terms of biological role, catalyzes the ATP-dependent transfer of a sulfur to tRNA to produce 4-thiouridine in position 8 of tRNAs, which functions as a near-UV photosensor. Also catalyzes the transfer of sulfur to the sulfur carrier protein ThiS, forming ThiS-thiocarboxylate. This is a step in the synthesis of thiazole, in the thiamine biosynthesis pathway. The sulfur is donated as persulfide by IscS. The polypeptide is Probable tRNA sulfurtransferase (Staphylococcus aureus (strain bovine RF122 / ET3-1)).